The primary structure comprises 538 residues: Atos homolog protein B (538 aa).

The span at 1–18 (MRHVQAEPSPSSEPEAGP) shows a compositional bias: low complexity. Disordered regions lie at residues 1-103 (MRHV…GLLG), 156-185 (HTRD…QLHT), and 197-308 (GGKS…PMGR). The segment covering 227 to 238 (HTPPGPGPPGPC) has biased composition (pro residues). A phosphoserine mark is found at serine 254 and serine 255. The span at 274 to 286 (AANSSDAKATSFW) shows a compositional bias: polar residues. A required for macropage invasion region spans residues 348-430 (LLGNFEESLL…VPKVGTVQVT (83 aa)). Residues 436-444 (QTVVKMFLV) form a transactivation domain 1 (TAD1) region.

The protein belongs to the ATOS family.

Its subcellular location is the nucleus. Functionally, transcription regulator that may syncronize transcriptional and translational programs. The protein is Atos homolog protein B of Macaca fascicularis (Crab-eating macaque).